A 499-amino-acid polypeptide reads, in one-letter code: uncharacterized protein (499 aa).

The RING-type; degenerate zinc-finger motif lies at 10–57; it reads CGICGQEYSEDEKLLIPRILTECGHTICTGCAGKIKGQSSIIACPFDR. Residues 101–147 form a B box-type; degenerate zinc finger; the sequence is NKNGVCDENTNHHASNYCETCDADLCEECWTWIHSISTLAHHEKKMI.

This is an uncharacterized protein from Caenorhabditis elegans.